The primary structure comprises 811 residues: Glycerol-3-phosphate acyltransferase (811 aa).

Residues 309-314 carry the HXXXXD motif motif; it reads CHRSHM.

Belongs to the GPAT/DAPAT family.

The protein localises to the cell inner membrane. It catalyses the reaction sn-glycerol 3-phosphate + an acyl-CoA = a 1-acyl-sn-glycero-3-phosphate + CoA. It functions in the pathway phospholipid metabolism; CDP-diacylglycerol biosynthesis; CDP-diacylglycerol from sn-glycerol 3-phosphate: step 1/3. This is Glycerol-3-phosphate acyltransferase from Colwellia psychrerythraea (strain 34H / ATCC BAA-681) (Vibrio psychroerythus).